Reading from the N-terminus, the 89-residue chain is Progonadoliberin-1 (89 aa).

The N-terminal stretch at 1–23 (MKAFPTFALLFLVLLFSAHVSDA) is a signal peptide. Q24 carries the pyrrolidone carboxylic acid modification. G33 carries the post-translational modification Glycine amide.

Belongs to the GnRH family. Expressed in the forebrain from larval stages.

It localises to the secreted. In terms of biological role, stimulates the secretion of gonadotropins. This is Progonadoliberin-1 (gnrh1) from Xenopus laevis (African clawed frog).